The following is a 246-amino-acid chain: DNA repair protein RecO (246 aa).

The protein belongs to the RecO family.

Functionally, involved in DNA repair and RecF pathway recombination. In Maridesulfovibrio salexigens (strain ATCC 14822 / DSM 2638 / NCIMB 8403 / VKM B-1763) (Desulfovibrio salexigens), this protein is DNA repair protein RecO.